Here is a 180-residue protein sequence, read N- to C-terminus: Alpha-S2-casein-like A (180 aa).

An N-terminal signal peptide occupies residues 1–15 (MRFFVFTCLLAVALA). Phosphoserine is present on residues serine 23 and serine 25. The interval 46 to 66 (PTNQETPSVSSSEESVEVQTE) is disordered.

It belongs to the alpha-casein family. In terms of tissue distribution, mammary gland specific. Secreted in milk.

The protein localises to the secreted. In terms of biological role, important role in the capacity of milk to transport calcium phosphate. The chain is Alpha-S2-casein-like A (CSN1S2A) from Oryctolagus cuniculus (Rabbit).